The sequence spans 331 residues: 6-phosphogluconolactonase (331 aa).

This sequence belongs to the cycloisomerase 2 family.

The catalysed reaction is 6-phospho-D-glucono-1,5-lactone + H2O = 6-phospho-D-gluconate + H(+). The protein operates within carbohydrate degradation; pentose phosphate pathway; D-ribulose 5-phosphate from D-glucose 6-phosphate (oxidative stage): step 2/3. Functionally, catalyzes the hydrolysis of 6-phosphogluconolactone to 6-phosphogluconate. The polypeptide is 6-phosphogluconolactonase (Salmonella choleraesuis (strain SC-B67)).